The chain runs to 283 residues: MGKIIDGKKIASEIRNELKEEVKKFTEEGRPPGLSVVLVGDDPASRTYVRMKEKVAKEIGIYSKVDYLSRQTTQDELLDIVDKLNNDEKIDGILVQLPLPDHIDEKAVIEAISPFKDVDGFHPINTGKLFSGMTGQRFEACTPLGIIELLDREGIEIDGKKAVVVGRSNIVGKPVAHLLLERHATVTVCHSHTADLGIETRQADILVVAAGRPKLVKGEMVKEGAAVIDVGTNRVDGHLVGDVDFEAARQRAGYITPVPGGVGPMTIAMLMKNTVKARKYHGV.

NADP(+) is bound by residues 166 to 168 (GRS), serine 191, and threonine 232.

The protein belongs to the tetrahydrofolate dehydrogenase/cyclohydrolase family. As to quaternary structure, homodimer.

The enzyme catalyses (6R)-5,10-methylene-5,6,7,8-tetrahydrofolate + NADP(+) = (6R)-5,10-methenyltetrahydrofolate + NADPH. It carries out the reaction (6R)-5,10-methenyltetrahydrofolate + H2O = (6R)-10-formyltetrahydrofolate + H(+). It participates in one-carbon metabolism; tetrahydrofolate interconversion. Its function is as follows. Catalyzes the oxidation of 5,10-methylenetetrahydrofolate to 5,10-methenyltetrahydrofolate and then the hydrolysis of 5,10-methenyltetrahydrofolate to 10-formyltetrahydrofolate. The sequence is that of Bifunctional protein FolD from Halothermothrix orenii (strain H 168 / OCM 544 / DSM 9562).